Consider the following 153-residue polypeptide: 6,7-dimethyl-8-ribityllumazine synthase (153 aa).

5-amino-6-(D-ribitylamino)uracil contacts are provided by residues F22, 56 to 58 (AFE), and 80 to 82 (TVI). 85–86 (ST) contributes to the (2S)-2-hydroxy-3-oxobutyl phosphate binding site. H88 acts as the Proton donor in catalysis. F113 provides a ligand contact to 5-amino-6-(D-ribitylamino)uracil. Residue R127 participates in (2S)-2-hydroxy-3-oxobutyl phosphate binding.

It belongs to the DMRL synthase family. Forms an icosahedral capsid composed of 60 subunits, arranged as a dodecamer of pentamers.

It catalyses the reaction (2S)-2-hydroxy-3-oxobutyl phosphate + 5-amino-6-(D-ribitylamino)uracil = 6,7-dimethyl-8-(1-D-ribityl)lumazine + phosphate + 2 H2O + H(+). It functions in the pathway cofactor biosynthesis; riboflavin biosynthesis; riboflavin from 2-hydroxy-3-oxobutyl phosphate and 5-amino-6-(D-ribitylamino)uracil: step 1/2. Its function is as follows. Catalyzes the formation of 6,7-dimethyl-8-ribityllumazine by condensation of 5-amino-6-(D-ribitylamino)uracil with 3,4-dihydroxy-2-butanone 4-phosphate. This is the penultimate step in the biosynthesis of riboflavin. In Haemophilus ducreyi (strain 35000HP / ATCC 700724), this protein is 6,7-dimethyl-8-ribityllumazine synthase.